A 365-amino-acid polypeptide reads, in one-letter code: Guanine nucleotide-binding protein alpha-6 subunit (365 aa).

Gly-2 carries the N-myristoyl glycine lipid modification. The 323-residue stretch at 42-364 folds into the G-alpha domain; it reads NRFKILLLGT…NENLRSAGLH (323 aa). The interval 45–58 is G1 motif; that stretch reads KILLLGTAESGKST. Residues 50–57, 187–193, 212–216, 281–284, and Ala-336 each bind GTP; these read GTAESGKS, VHCRIST, DVGGQ, and NKYD. The Mg(2+) site is built by Ser-57 and Thr-193. Residues 185–193 form a G2 motif region; that stretch reads DIVHCRIST. A G3 motif region spans residues 208–217; it reads FKMVDVGGQR. The tract at residues 277 to 284 is G4 motif; sequence VLFLNKYD. Residues 334 to 339 are G5 motif; sequence TTATDT.

Belongs to the G-alpha family. G proteins are composed of 3 units; alpha, beta and gamma. The alpha chain contains the guanine nucleotide binding site.

Its function is as follows. Guanine nucleotide-binding proteins (G proteins) are involved as modulators or transducers in various transmembrane signaling systems. This Caenorhabditis briggsae protein is Guanine nucleotide-binding protein alpha-6 subunit (gpa-6).